Here is a 445-residue protein sequence, read N- to C-terminus: Glucose-6-phosphate isomerase (445 aa).

Glutamate 284 (proton donor) is an active-site residue. Active-site residues include histidine 305 and lysine 419.

It belongs to the GPI family.

It is found in the cytoplasm. The enzyme catalyses alpha-D-glucose 6-phosphate = beta-D-fructose 6-phosphate. It participates in carbohydrate biosynthesis; gluconeogenesis. Its pathway is carbohydrate degradation; glycolysis; D-glyceraldehyde 3-phosphate and glycerone phosphate from D-glucose: step 2/4. Its function is as follows. Catalyzes the reversible isomerization of glucose-6-phosphate to fructose-6-phosphate. This chain is Glucose-6-phosphate isomerase, found in Leptospira borgpetersenii serovar Hardjo-bovis (strain JB197).